The sequence spans 275 residues: UPF0758 protein RL2068 (275 aa).

The segment at 1–45 (MAKGPVSTSSDDELPFETQEPIAADERSFFGGQPQKPSAPNARAA) is disordered. The region spanning 153–275 (VLSSWSSVIQ…HVSLKGLKLI (123 aa)) is the MPN domain. The Zn(2+) site is built by His-224, His-226, and Asp-237. The JAMM motif signature appears at 224 to 237 (HNHPSGDPTPSRAD).

The protein belongs to the UPF0758 family.

The chain is UPF0758 protein RL2068 from Rhizobium johnstonii (strain DSM 114642 / LMG 32736 / 3841) (Rhizobium leguminosarum bv. viciae).